A 149-amino-acid polypeptide reads, in one-letter code: Peptide deformylase (149 aa).

Residues C92 and H134 each contribute to the Fe cation site. E135 is a catalytic residue. Fe cation is bound at residue H138.

Belongs to the polypeptide deformylase family. The cofactor is Fe(2+).

The enzyme catalyses N-terminal N-formyl-L-methionyl-[peptide] + H2O = N-terminal L-methionyl-[peptide] + formate. Functionally, removes the formyl group from the N-terminal Met of newly synthesized proteins. Requires at least a dipeptide for an efficient rate of reaction. N-terminal L-methionine is a prerequisite for activity but the enzyme has broad specificity at other positions. The protein is Peptide deformylase of Buchnera aphidicola subsp. Cinara cedri (strain Cc).